The following is a 38-amino-acid chain: MAQTNSNKKTVELNRTSLYWGLLLIFVLAVLFSSYIFN.

Residues 17 to 37 (SLYWGLLLIFVLAVLFSSYIF) form a helical membrane-spanning segment.

The protein belongs to the PsbL family. In terms of assembly, PSII is composed of 1 copy each of membrane proteins PsbA, PsbB, PsbC, PsbD, PsbE, PsbF, PsbH, PsbI, PsbJ, PsbK, PsbL, PsbM, PsbT, PsbY, PsbZ, Psb30/Ycf12, at least 3 peripheral proteins of the oxygen-evolving complex and a large number of cofactors. It forms dimeric complexes.

Its subcellular location is the plastid. The protein localises to the chloroplast thylakoid membrane. One of the components of the core complex of photosystem II (PSII). PSII is a light-driven water:plastoquinone oxidoreductase that uses light energy to abstract electrons from H(2)O, generating O(2) and a proton gradient subsequently used for ATP formation. It consists of a core antenna complex that captures photons, and an electron transfer chain that converts photonic excitation into a charge separation. This subunit is found at the monomer-monomer interface and is required for correct PSII assembly and/or dimerization. This chain is Photosystem II reaction center protein L, found in Euglena gracilis.